The following is a 37-amino-acid chain: Large ribosomal subunit protein bL36A (37 aa).

It belongs to the bacterial ribosomal protein bL36 family.

The polypeptide is Large ribosomal subunit protein bL36A (Clavibacter sepedonicus (Clavibacter michiganensis subsp. sepedonicus)).